The primary structure comprises 394 residues: DNA repair protein brc-2 (394 aa).

Residues 1–12 (MGDSSKKVKDSF) show a composition bias toward basic and acidic residues. Disordered stretches follow at residues 1–30 (MGDS…VPIS) and 56–136 (MLNS…EKKK). Positions 1–60 (MGDSSKKVKDSFDTISEPDSFDEPKGVPISMEPVFSTAAGIRIDVKQESIDKSKKMLNSD) are interaction with rad-51. Positions 28–62 (PISMEPVFSTAAGIRIDVKQESIDKSKKMLNSDLK) are BRCA2 repeat-like region. The span at 56–73 (MLNSDLKSKSSSKGGFSS) shows a compositional bias: low complexity. The interaction with rad-51-DNA complexes stretch occupies residues 60 to 89 (DLKSKSSSKGGFSSPLVRKNNGSSAFVSPF). The segment covering 124 to 134 (KKSKKHSKKEK) has biased composition (basic residues). The tract at residues 371–389 (WKDFGSYLKHKEDKKKRRS) is required for ssDNA binding.

In terms of assembly, interacts (via N-terminus) with rad-51; regulates rad-51 recruitment to sites of DNA double strand breaks. Expressed in the germline, with highest expression in cells undergoing oogenesis.

Its subcellular location is the nucleus. It localises to the chromosome. Functionally, required for the homologous recombination repair of DNA double strand breaks, thereby playing a role in chromosome integrity. Acts by targeting rad-51 to sites of DNA damage and stabilizing rad-51-DNA filaments by blocking ATP hydrolysis catalyzed by rad-51. Promotes rad-51 mediated displacement-loop (D-loop) formation during strand invasion between the invading single-stranded DNA (ssDNA) and the homologous duplex DNA. Also functions independently of rad-51 in DNA double-strand break (DSB) repair by promoting DNA single-strand annealing (SSA) when the homologous recombination (HR) and non-homologous end joining (NHEJ) pathways are compromised. Binds selectively to single-stranded (ssDNA) via its C-terminus. Involved in telomere maintenance and replicative senescence. The protein is DNA repair protein brc-2 of Caenorhabditis elegans.